Reading from the N-terminus, the 965-residue chain is UvrABC system protein A (965 aa).

32–39 (GLSGSGKS) contacts ATP. A C4-type zinc finger spans residues 254–281 (CPVCDYSLPELEPRLFSFNAPMGACPAC). 2 consecutive ABC transporter domains span residues 311-588 (WDRR…PRSL) and 608-937 (PNAT…HFLA). 641–648 (GVSGSGKS) contributes to the ATP binding site. The C4-type zinc-finger motif lies at 740-766 (CEACEGDGLIKVEMHFLPDVYVPCDIC).

It belongs to the ABC transporter superfamily. UvrA family. Forms a heterotetramer with UvrB during the search for lesions.

It localises to the cytoplasm. The UvrABC repair system catalyzes the recognition and processing of DNA lesions. UvrA is an ATPase and a DNA-binding protein. A damage recognition complex composed of 2 UvrA and 2 UvrB subunits scans DNA for abnormalities. When the presence of a lesion has been verified by UvrB, the UvrA molecules dissociate. The chain is UvrABC system protein A from Xylella fastidiosa (strain Temecula1 / ATCC 700964).